A 539-amino-acid chain; its full sequence is Ell-associated factor Eaf (539 aa).

The segment at 119-539 (TRSEMTHHKP…SSNSSDDDDD (421 aa)) is disordered. Over residues 132 to 146 (PATNINHNNIPMSTN) the composition is skewed to polar residues. Over residues 151–163 (GPGPGPGSGPSPP) the composition is skewed to pro residues. The segment covering 174 to 195 (KLENSTMRISSKTKVSTGSRRN) has biased composition (polar residues). Position 205 is a phosphoserine (Ser-205). The span at 220–238 (RSPQSAPAWNANNAQQTLP) shows a compositional bias: polar residues. Low complexity-rich tracts occupy residues 267–278 (SGSSTGSSTGQP), 309–337 (MHQN…YGRG), and 345–375 (NNYA…SHHS). Over residues 420 to 435 (DSSDSDSGSESDDSTD) the composition is skewed to acidic residues. 2 stretches are compositionally biased toward low complexity: residues 461 to 493 (HQQL…QPQQ) and 520 to 533 (NDLL…SSNS).

Belongs to the EAF family.

It localises to the nucleus. In terms of biological role, promotes transcriptional elongation by Su(Tpl)/ELL. Essential for development. The chain is Ell-associated factor Eaf from Drosophila willistoni (Fruit fly).